A 334-amino-acid polypeptide reads, in one-letter code: Procathepsin L (334 aa).

The signal sequence occupies residues 1–17 (MTPLLLLAVLCLGTALA). A propeptide spans 18–113 (TPKFDQTFNA…RLFQEPLMLQ (96 aa)) (activation peptide). A Zn(2+)-binding site is contributed by Glu122. Cystine bridges form between Cys135–Cys178 and Cys169–Cys211. Residue Cys138 is part of the active site. Zn(2+) is bound by residues Glu163, Asp184, Glu199, Glu205, Asp227, Asp250, His253, Asp273, and Asp275. Cys269 and Cys322 are disulfide-bonded. The active site involves His276. A propeptide spanning residues 289–290 (DS) is cleaved from the precursor. Residue Asn300 is part of the active site.

Belongs to the peptidase C1 family. As to quaternary structure, dimer of a heavy and a light chain linked by disulfide bonds. Interacts with Long isoform of CD74/Ii chain; the interaction stabilizes the conformation of mature CTSL. During export along the endocytic pathway, pro-CTSL undergoes several proteolytic cleavages to generate the CTSL single-chain and two-chain mature forms, composed of a heavy chain linked to a light chain by disulfide bonds. Autocleavage; produces the single-chain CTSL after cleavage of the propeptide. The cleavage can be intermolecular. In terms of tissue distribution, both mature cathepsin L1 and procathepsin L are found in the upper epidermis. The lower epidermis predominantly contains procathepsin L. In seminiferous tubules expression is greater at stages VI-VII than at stages IX-XII.

It localises to the lysosome. It is found in the apical cell membrane. The protein resides in the cytoplasmic vesicle. The protein localises to the secretory vesicle. Its subcellular location is the chromaffin granule. It localises to the secreted. It is found in the extracellular space. The catalysed reaction is Specificity close to that of papain. As compared to cathepsin B, cathepsin L exhibits higher activity toward protein substrates, but has little activity on Z-Arg-Arg-NHMec, and no peptidyl-dipeptidase activity.. Its activity is regulated as follows. Inhibited by the propeptide produced by autocleavage. Long isoform of CD74/Ii chain stabilizes the conformation of mature CTSL by binding to its active site and serving as a chaperone to help maintain a pool of mature enzyme in endocytic compartments and extracellular space of APCs. IFNG enhances the conversion into the CTSL mature and active form. Inhibited by CST6. Inhibited by the glycopeptide antibiotic teicoplanin. Inhibited by amantadine. Its function is as follows. Thiol protease important for the overall degradation of proteins in lysosomes. Plays a critical for normal cellular functions such as general protein turnover, antigen processing and bone remodeling. Involved in the solubilization of cross-linked TG/thyroglobulin and in the subsequent release of thyroid hormone thyroxine (T4) by limited proteolysis of TG/thyroglobulin in the thyroid follicle lumen. In neuroendocrine chromaffin cells secretory vesicles, catalyzes the prohormone proenkephalin processing to the active enkephalin peptide neurotransmitter. In thymus, regulates CD4(+) T cell positive selection by generating the major histocompatibility complex class II (MHCII) bound peptide ligands presented by cortical thymic epithelial cells. Also mediates invariant chain processing in cortical thymic epithelial cells. Major elastin-degrading enzyme at neutral pH. Accumulates as a mature and active enzyme in the extracellular space of antigen presenting cells (APCs) to regulate degradation of the extracellular matrix in the course of inflammation. Secreted form generates endostatin from COL18A1. Critical for cardiac morphology and function. Plays an important role in hair follicle morphogenesis and cycling, as well as epidermal differentiation. Required for maximal stimulation of steroidogenesis by TIMP1. The chain is Procathepsin L from Rattus norvegicus (Rat).